The sequence spans 1095 residues: MSVSIPSNSVPSSASRFQVHVINEGHGSAAAVGDSADPPHYEETSFGDEAQNRLRISFRPGNQECYDNFLQTGETAKTDTTFHAYDSHTNTYYLQTFGHNTMDAVPKIEYYRNTGSVSGPKVNRPSLLEIHEQLAKNVTVAPGSADRVANGDGMPGDEQAENKEEDMTGVVKFGWVKGVLVRCMLNIWGVMLFIRLSWIVGEAGIGLGVLIILLSTMVTSITGLSTSAIATNGFVRGGGAYYLISRSLGPEFGGSIGLIFAFANAVAVAMYVVGFAETVVDLLKESDSMMVDPTNDIRIIGSITVVILLGISVAGMEWEAKAQVILLVILLIAIANFFIGTVIPSNNEKKSRGFFNYQASIFAENFGPSFTKGEGFFSVFAIFFPAATGILAGANISGDLEDPQDAIPRGTMLAIFITTVAYIGVAICVAACVVRDATGSMNDTIVSGMNCNGSAACGLGYDFSRCQHEPCQYGLMNNFQVMSMVSGFGPLITAGIFSATLSSALASLVSAPKVFQALCKDNIFKGLQFFAKGYGKNNEPLRGYFLTFVIAMAFILIAELNVIAPIISNFFLASYALINFSCFHASYAKSPGWRPAYGIYNMWVSLFGAILCCAVMFVINWWAAVITYVIELFLYIYVTYKKPDVNWGSSTQALSYVSALDNALELTTVEDHVKNFRPQCIVLTGGPMTRPALLDITHAFTKNSGLCICCEVFVGPRKLCVKEMNSGMAKKQAWLIKNKIKAFYAAVAADCFRDGVRSLLQASGLGRMKPNTLVIGYKKNWRKAPLSELENYVGIIHDAFDFEIGVVIVRISQGFDISPVLQVQDELEKLEQERLALEAAIKDNECEEGKGGIRGLFKKAGKLNITKPAPKKDGNISSIQSMHVGEFNQKLVEASAQFKKKQGKGTIDVWWLFDDGGLTLLIPYILTLRKKWKDCKLRIYVGGKITRIEEEKISMASLLSKFRIKFADIHIIGDINIKPNKESWKVFEEMIEPYRLHESHKDLTTAEKLKRESPWKITDAELEAVKEKSYRQVRLNELLQEHSRAANLIVLSLPVARKGSISDLLYMAWLEILTKNLPPVLLVRGNHKNVLTFYS.

Residues 1 to 173 are Cytoplasmic-facing; the sequence is MSVSIPSNSV…EEDMTGVVKF (173 aa). The RFXV motif motif lies at 16–19; it reads RFQV. The segment at 29–49 is disordered; the sequence is AAAVGDSADPPHYEETSFGDE. Residues Ser57 and Ser87 each carry the phosphoserine modification. Residues Thr91, Thr96, Thr101, and Thr114 each carry the phosphothreonine modification. Ser116 is subject to Phosphoserine. At Ser126 the chain carries Phosphoserine; by AMPK. The residue at position 144 (Ser144) is a Phosphoserine. The chain crosses the membrane as a helical span at residues 174–194; it reads GWVKGVLVRCMLNIWGVMLFI. Residues 195-197 lie on the Extracellular side of the membrane; sequence RLS. The chain crosses the membrane as a helical span at residues 198–218; that stretch reads WIVGEAGIGLGVLIILLSTMV. The Cytoplasmic segment spans residues 219–255; sequence TSITGLSTSAIATNGFVRGGGAYYLISRSLGPEFGGS. A helical membrane pass occupies residues 256–276; that stretch reads IGLIFAFANAVAVAMYVVGFA. Residues 277-298 are Extracellular-facing; the sequence is ETVVDLLKESDSMMVDPTNDIR. Residues 299–319 form a helical membrane-spanning segment; sequence IIGSITVVILLGISVAGMEWE. The Cytoplasmic portion of the chain corresponds to 320-323; sequence AKAQ. Residues 324-344 traverse the membrane as a helical segment; the sequence is VILLVILLIAIANFFIGTVIP. Over 345-375 the chain is Extracellular; sequence SNNEKKSRGFFNYQASIFAENFGPSFTKGEG. A helical transmembrane segment spans residues 376 to 396; it reads FFSVFAIFFPAATGILAGANI. The Cytoplasmic portion of the chain corresponds to 397–413; the sequence is SGDLEDPQDAIPRGTML. A helical membrane pass occupies residues 414–434; it reads AIFITTVAYIGVAICVAACVV. At 435–546 the chain is on the extracellular side; sequence RDATGSMNDT…NNEPLRGYFL (112 aa). N-linked (GlcNAc...) asparagine glycosylation is found at Asn442 and Asn452. 2 helical membrane passes run 547-567 and 568-588; these read TFVIAMAFILIAELNVIAPII and SNFFLASYALINFSCFHASYA. The Extracellular portion of the chain corresponds to 589-605; sequence KSPGWRPAYGIYNMWVS. Residues 606 to 626 form a helical membrane-spanning segment; it reads LFGAILCCAVMFVINWWAAVI. The Cytoplasmic portion of the chain corresponds to 627 to 1095; sequence TYVIELFLYI…NHKNVLTFYS (469 aa).

The protein belongs to the SLC12A transporter family. As to quaternary structure, when phosphorylated, interacts with PPP3CB. Phosphorylated at Ser-87, Thr-96 and Thr-101 by OXSR1/OSR1 and STK39/SPAK downstream of WNK kinases (WNK1, WNK2, WNK3 or WNK4), promoting its activity. Short-term cyclosporine administration increases SLC12A1 phosphorylation in kidney thick ascending limb, possibly through the inhibition of PPP3CB/calcineurin A beta phosphatase. In terms of tissue distribution, predominantly expressed in kidney (at protein level). As to expression, kidney-specific; most highly expressed in the outer stripe of outer medulla (at protein level). Kidney-specific; most highly expressed in the cortical thick ascending limb (at protein level). In terms of tissue distribution, kidney-specific; most highly expressed in the inner stripe of outer medulla (at protein level).

The protein resides in the apical cell membrane. It carries out the reaction K(+)(out) + 2 chloride(out) + Na(+)(out) = K(+)(in) + 2 chloride(in) + Na(+)(in). Its activity is regulated as follows. Activated following phosphorylation by OXSR1/OSR1 and STK39/SPAK downstream of WNK kinases (WNK1, WNK2, WNK3 or WNK4). Inhibited by mercury dichloride and diuretic drug bumetaide. Inactive in isotonic conditions. In terms of biological role, renal sodium, potassium and chloride ion cotransporter that mediates the transepithelial NaCl reabsorption in the thick ascending limb and plays an essential role in the urinary concentration and volume regulation. Electrically silent transporter system. Its function is as follows. High affinity, high capacity cotransporter for sodium, potassium and chloride ions, with a coupling ratio 1Na(+):1K(+):2Cl(-). High affinity, low capacity cotransporter for sodium, potassium and chloride ions, with a coupling ratio 1Na(+):1K(+):2Cl(-). Functionally, low affinity, low capacity cotransporter for sodium, potassium and chloride ions, with a coupling ratio 1Na(+):1K(+):2Cl(-). This is Solute carrier family 12 member 1 (Slc12a1) from Mus musculus (Mouse).